Reading from the N-terminus, the 445-residue chain is Phosphoglucosamine mutase (445 aa).

S99 (phosphoserine intermediate) is an active-site residue. S99, D242, D244, and D246 together coordinate Mg(2+). S99 is subject to Phosphoserine.

The protein belongs to the phosphohexose mutase family. It depends on Mg(2+) as a cofactor. Activated by phosphorylation.

It carries out the reaction alpha-D-glucosamine 1-phosphate = D-glucosamine 6-phosphate. In terms of biological role, catalyzes the conversion of glucosamine-6-phosphate to glucosamine-1-phosphate. The protein is Phosphoglucosamine mutase of Helicobacter acinonychis (strain Sheeba).